Reading from the N-terminus, the 201-residue chain is MRLFVGLGNPGSKYEGNRHNIGFMVVDEIARRHGFSPWRRRFQGETSEGVLGGERVVLLKPATYMNESGRAVQEAAKFFKLGESEVVVFHDEIELPPAKMRVKVGGGIAGHNGLRSISAHLGNEYRRVRLGVGHPGVKEIVHIHVLNDFAKSERPWVAALCETVAEHAELLVSGKDSQFQNRVHLAMDAKGFATENNGGKD.

Tyr-14 serves as a coordination point for tRNA. Residue His-19 is the Proton acceptor of the active site. The tRNA site is built by Tyr-64, Asn-66, and Asn-112.

It belongs to the PTH family. Monomer.

The protein resides in the cytoplasm. The catalysed reaction is an N-acyl-L-alpha-aminoacyl-tRNA + H2O = an N-acyl-L-amino acid + a tRNA + H(+). In terms of biological role, hydrolyzes ribosome-free peptidyl-tRNAs (with 1 or more amino acids incorporated), which drop off the ribosome during protein synthesis, or as a result of ribosome stalling. Functionally, catalyzes the release of premature peptidyl moieties from peptidyl-tRNA molecules trapped in stalled 50S ribosomal subunits, and thus maintains levels of free tRNAs and 50S ribosomes. In Afipia carboxidovorans (strain ATCC 49405 / DSM 1227 / KCTC 32145 / OM5) (Oligotropha carboxidovorans), this protein is Peptidyl-tRNA hydrolase.